A 270-amino-acid polypeptide reads, in one-letter code: Putative ABC transporter ATP-binding protein MG304 (270 aa).

Residues 1 to 232 (MLQVKNLSFK…LDLFHNHHFN (232 aa)) enclose the ABC transporter domain. Position 36–43 (36–43 (GHNGSGKS)) interacts with ATP.

This sequence belongs to the ABC transporter superfamily.

This is Putative ABC transporter ATP-binding protein MG304 from Mycoplasma genitalium (strain ATCC 33530 / DSM 19775 / NCTC 10195 / G37) (Mycoplasmoides genitalium).